We begin with the raw amino-acid sequence, 415 residues long: Putative serpin-Z6C (415 aa).

The interval 357-381 (GTEAAAATAVCLTFASAAPSSRRPA) is RCL.

This sequence belongs to the serpin family.

Probable serine protease inhibitor. In Oryza sativa subsp. japonica (Rice), this protein is Putative serpin-Z6C.